A 413-amino-acid chain; its full sequence is Phosphopentomutase (413 aa).

Positions 11, 306, 311, 347, 348, and 359 each coordinate Mn(2+).

This sequence belongs to the phosphopentomutase family. The cofactor is Mn(2+).

It localises to the cytoplasm. The catalysed reaction is 2-deoxy-alpha-D-ribose 1-phosphate = 2-deoxy-D-ribose 5-phosphate. It catalyses the reaction alpha-D-ribose 1-phosphate = D-ribose 5-phosphate. Its pathway is carbohydrate degradation; 2-deoxy-D-ribose 1-phosphate degradation; D-glyceraldehyde 3-phosphate and acetaldehyde from 2-deoxy-alpha-D-ribose 1-phosphate: step 1/2. Isomerase that catalyzes the conversion of deoxy-ribose 1-phosphate (dRib-1-P) and ribose 1-phosphate (Rib-1-P) to deoxy-ribose 5-phosphate (dRib-5-P) and ribose 5-phosphate (Rib-5-P), respectively. In Helicobacter acinonychis (strain Sheeba), this protein is Phosphopentomutase.